Reading from the N-terminus, the 473-residue chain is Protein TED1 (473 aa).

At Met1–Lys8 the chain is on the cytoplasmic side. The chain crosses the membrane as a helical span at residues Phe9–Ser29. The Lumenal portion of the chain corresponds to Phe30–His451. 5 N-linked (GlcNAc...) asparagine glycosylation sites follow: Asn38, Asn147, Asn229, Asn266, and Asn307. A helical transmembrane segment spans residues Val452 to Phe472. Position 473 (Val473) is a topological domain, cytoplasmic.

Post-translationally, N-glycosylated.

It is found in the endoplasmic reticulum membrane. Its function is as follows. Acts together with EMP24 and ERV25 in cargo exit from the endoplasmic reticulum. This chain is Protein TED1 (TED1), found in Saccharomyces cerevisiae (strain ATCC 204508 / S288c) (Baker's yeast).